The sequence spans 733 residues: Photosystem I P700 chlorophyll a apoprotein A2 (733 aa).

The next 8 helical transmembrane spans lie at 46-69, 134-157, 174-198, 272-290, 329-352, 368-394, 416-438, and 516-534; these read IFAS…FHVA, LYLG…LHLQ, LNHH…HVAI, IAHH…GHMY, LHMQ…QHMY, AALY…IFFV, AIIS…LYIH, and FLVH…LILV. Positions 558 and 567 each coordinate [4Fe-4S] cluster. A run of 2 helical transmembrane segments spans residues 574–595 and 642–664; these read AFYL…YWHW and LSVW…MFLI. Residues histidine 653, methionine 661, and tyrosine 669 each contribute to the chlorophyll a site. Tryptophan 670 lines the phylloquinone pocket. A helical membrane pass occupies residues 706 to 726; it reads LVGLVHFTVGYVLTYAAFVIA.

It belongs to the PsaA/PsaB family. In terms of assembly, the PsaA/B heterodimer binds the P700 chlorophyll special pair and subsequent electron acceptors. PSI consists of a core antenna complex that captures photons, and an electron transfer chain that converts photonic excitation into a charge separation. The eukaryotic PSI reaction center is composed of at least 11 subunits. P700 is a chlorophyll a/chlorophyll a' dimer, A0 is one or more chlorophyll a, A1 is one or both phylloquinones and FX is a shared 4Fe-4S iron-sulfur center. is required as a cofactor.

The protein resides in the plastid. The protein localises to the chloroplast thylakoid membrane. The enzyme catalyses reduced [plastocyanin] + hnu + oxidized [2Fe-2S]-[ferredoxin] = oxidized [plastocyanin] + reduced [2Fe-2S]-[ferredoxin]. Functionally, psaA and PsaB bind P700, the primary electron donor of photosystem I (PSI), as well as the electron acceptors A0, A1 and FX. PSI is a plastocyanin/cytochrome c6-ferredoxin oxidoreductase, converting photonic excitation into a charge separation, which transfers an electron from the donor P700 chlorophyll pair to the spectroscopically characterized acceptors A0, A1, FX, FA and FB in turn. Oxidized P700 is reduced on the lumenal side of the thylakoid membrane by plastocyanin or cytochrome c6. The polypeptide is Photosystem I P700 chlorophyll a apoprotein A2 (Phaeodactylum tricornutum (strain CCAP 1055/1)).